Consider the following 209-residue polypeptide: Uracil phosphoribosyltransferase (209 aa).

Residues R79, R104, and 131-139 contribute to the 5-phospho-alpha-D-ribose 1-diphosphate site; that span reads DPMLATGNS. Uracil contacts are provided by residues I194 and 199-201; that span reads GDA. D200 provides a ligand contact to 5-phospho-alpha-D-ribose 1-diphosphate.

The protein belongs to the UPRTase family. Mg(2+) is required as a cofactor.

It catalyses the reaction UMP + diphosphate = 5-phospho-alpha-D-ribose 1-diphosphate + uracil. Its pathway is pyrimidine metabolism; UMP biosynthesis via salvage pathway; UMP from uracil: step 1/1. Its activity is regulated as follows. Allosterically activated by GTP. Functionally, catalyzes the conversion of uracil and 5-phospho-alpha-D-ribose 1-diphosphate (PRPP) to UMP and diphosphate. The chain is Uracil phosphoribosyltransferase from Rhizobium etli (strain CIAT 652).